Consider the following 482-residue polypeptide: Cysteine--tRNA ligase (482 aa).

Cys-29 serves as a coordination point for Zn(2+). A 'HIGH' region motif is present at residues 31-41 (PTVYDSAHVGH). Zn(2+)-binding residues include Cys-210, His-235, and Glu-239. A 'KMSKS' region motif is present at residues 272-276 (KMSKS). An ATP-binding site is contributed by Lys-275.

It belongs to the class-I aminoacyl-tRNA synthetase family. Monomer. It depends on Zn(2+) as a cofactor.

The protein localises to the cytoplasm. The catalysed reaction is tRNA(Cys) + L-cysteine + ATP = L-cysteinyl-tRNA(Cys) + AMP + diphosphate. The protein is Cysteine--tRNA ligase of Anaeromyxobacter sp. (strain Fw109-5).